A 256-amino-acid polypeptide reads, in one-letter code: Trypsin, alkaline A (256 aa).

The N-terminal stretch at methionine 1–alanine 17 is a signal peptide. The propeptide at valine 18–arginine 24 is activation peptide. The Peptidase S1 domain maps to isoleucine 25–serine 256. Residues cysteine 55 and cysteine 71 are joined by a disulfide bond. Residues histidine 70 and aspartate 115 each act as charge relay system in the active site. 2 disulfide bridges follow: cysteine 180–cysteine 197 and cysteine 209–cysteine 233. The active-site Charge relay system is serine 213.

This sequence belongs to the peptidase S1 family. In terms of tissue distribution, midgut.

It is found in the secreted. It localises to the extracellular space. It catalyses the reaction Preferential cleavage: Arg-|-Xaa, Lys-|-Xaa.. The chain is Trypsin, alkaline A from Manduca sexta (Tobacco hawkmoth).